The following is a 4451-amino-acid chain: Gramicidin S synthase 2 (4451 aa).

The tract at residues 467–1044 is domain 1 (proline-activating); it reads DKTIHQLFTE…IQEISNYING (578 aa). Carrier domains lie at 971–1046, 2006–2081, 3052–3127, and 4090–4165; these read VPTN…NGAK, APSS…ADGQ, RPRT…EETD, and APRN…THQE. O-(pantetheine 4'-phosphoryl)serine occurs at positions 1006, 2041, 3087, and 4125. The tract at residues 1521 to 2080 is domain 2 (valine-activating); that stretch reads DHVAVGWKDQ…SALAQYIADG (560 aa). The domain 3 (ornithine-activating) stretch occupies residues 2538 to 3135; it reads YATNKIFHEL…TDTEQYMAIQ (598 aa). Residues 3591–4173 form a domain 4 (leucine-activating) region; the sequence is IQELFEEQVK…QESENNVHQP (583 aa).

The protein belongs to the ATP-dependent AMP-binding enzyme family. Large multienzyme complex of GrsA and GrsB. The cofactor is pantetheine 4'-phosphate.

The protein operates within antibiotic biosynthesis; gramicidin S biosynthesis. This protein is a multifunctional enzyme, able to activate and polymerize the amino acids Pro, Val, Orn and Leu. Activation sites for these AA consist of individual domains. The sequence is that of Gramicidin S synthase 2 (grsB) from Aneurinibacillus migulanus (Bacillus migulanus).